The sequence spans 771 residues: Protein lin-54 homolog (771 aa).

2 disordered regions span residues 21-44 and 68-105; these read AMDE…SAQV and TNAK…IPSL. Residues 72–92 show a composition bias toward low complexity; sequence STTSSTTQLLLTPSSSSSTTT. Residues serine 288, serine 292, and serine 308 each carry the phosphoserine modification. The CRC domain maps to 544–657; that stretch reads PRKPCNCTRS…KCMGCKNFEE (114 aa). Residues 546 to 559 are DNA-binding; the sequence is KPCNCTRSQCLKLY. 9 residues coordinate Zn(2+): cysteine 548, cysteine 550, cysteine 555, cysteine 560, cysteine 562, cysteine 569, cysteine 572, cysteine 574, and cysteine 577. The linker stretch occupies residues 606 to 619; it reads IGKGKEGESDRRHS. Zn(2+)-binding residues include cysteine 622, cysteine 624, cysteine 629, cysteine 634, cysteine 636, cysteine 643, cysteine 647, cysteine 649, and cysteine 652. The tract at residues 622–635 is DNA-binding; sequence CNCKKSGCLKNYCE.

This sequence belongs to the lin-54 family. In terms of assembly, component of the DREAM complex.

It localises to the nucleus. Functionally, component of the DREAM complex, a multiprotein complex that can both act as a transcription activator or repressor depending on the context. Specifically recognizes the consensus motif 5'-TTYRAA-3' in target DNA. The polypeptide is Protein lin-54 homolog (lin54) (Danio rerio (Zebrafish)).